Reading from the N-terminus, the 158-residue chain is MAAGEVKSVLFVCLGNICRSPIAEAVFRKLVTDEKVENKWRIDSAATSTYEIGNPPDYRGQTCMKKHGITMNHIARQVTKDDFQTFDYILCMDESNLRDLKRKSNQVKDCKAKIELLGAYDPQKQLIIEDPYYGNEKDFETVYEQCVRCCKAFLEKPH.

A2 bears the N-acetylalanine mark. C13 (nucleophile) is an active-site residue. R19 is an active-site residue. Catalysis depends on D130, which acts as the Proton donor. A phosphotyrosine mark is found at Y132 and Y133.

It belongs to the low molecular weight phosphotyrosine protein phosphatase family.

Its subcellular location is the cytoplasm. The enzyme catalyses O-phospho-L-tyrosyl-[protein] + H2O = L-tyrosyl-[protein] + phosphate. The catalysed reaction is a phosphate monoester + H2O = an alcohol + phosphate. In terms of biological role, acts on tyrosine phosphorylated proteins, low-MW aryl phosphates and natural and synthetic acyl phosphates. This chain is Low molecular weight phosphotyrosine protein phosphatase (ACP1), found in Gallus gallus (Chicken).